Consider the following 167-residue polypeptide: MSHGSGLVRTTCSSGGALGPGQPSEGLLDRVYPLTHGALFKVAQMVTLLIAFICVRSSVPIDYGAHSFFEVVTMCDLIMILIFYLVHLFRFYRVLTCISWPLSELLHYLIGTLLLLIASIVIASKSYNQSGLVAGAIFGFLASFLCLASLWLSYKITCITQSSDASA.

The MARVEL domain occupies 32–158 (YPLTHGALFK…SLWLSYKITC (127 aa)). A run of 4 helical transmembrane segments spans residues 35 to 55 (THGALFKVAQMVTLLIAFICV), 69 to 89 (FEVVTMCDLIMILIFYLVHLF), 102 to 122 (LSELLHYLIGTLLLLIASIVI), and 132 to 152 (LVAGAIFGFLASFLCLASLWL).

It belongs to the chemokine-like factor family.

Its subcellular location is the membrane. The protein is CKLF-like MARVEL transmembrane domain-containing protein 7 (Cmtm7) of Mus musculus (Mouse).